The chain runs to 392 residues: ATP phosphoribosyltransferase regulatory subunit (392 aa).

This sequence belongs to the class-II aminoacyl-tRNA synthetase family. HisZ subfamily. Heteromultimer composed of HisG and HisZ subunits.

The protein resides in the cytoplasm. It participates in amino-acid biosynthesis; L-histidine biosynthesis; L-histidine from 5-phospho-alpha-D-ribose 1-diphosphate: step 1/9. In terms of biological role, required for the first step of histidine biosynthesis. May allow the feedback regulation of ATP phosphoribosyltransferase activity by histidine. The protein is ATP phosphoribosyltransferase regulatory subunit of Prochlorococcus marinus (strain MIT 9313).